A 320-amino-acid polypeptide reads, in one-letter code: rRNA methyltransferase 2, mitochondrial (320 aa).

Residues 1-18 constitute a mitochondrion transit peptide; sequence MILVYNRIRSIISSSLGR. S-adenosyl-L-methionine is bound by residues 83 to 86, D104, 178 to 179, and D203; these read PGAW and DI. Catalysis depends on K264, which acts as the Proton acceptor.

This sequence belongs to the class I-like SAM-binding methyltransferase superfamily. RNA methyltransferase RlmE family.

The protein localises to the mitochondrion. The enzyme catalyses uridine(2791) in 21S rRNA + S-adenosyl-L-methionine = 2'-O-methyluridine(2791) in 21S rRNA + S-adenosyl-L-homocysteine + H(+). S-adenosyl-L-methionine-dependent 2'-O-ribose methyltransferase that catalyzes the formation of 2'-O-methyluridine at position 2791 (Um2791) in the 21S mitochondrial large subunit ribosomal RNA (mtLSU rRNA), a universally conserved modification in the peptidyl transferase domain of the mtLSU rRNA. This Saccharomyces cerevisiae (strain ATCC 204508 / S288c) (Baker's yeast) protein is rRNA methyltransferase 2, mitochondrial.